The following is a 256-amino-acid chain: Trans-aconitate 2-methyltransferase (256 aa).

This sequence belongs to the methyltransferase superfamily. Tam family.

The protein resides in the cytoplasm. The catalysed reaction is trans-aconitate + S-adenosyl-L-methionine = (E)-3-(methoxycarbonyl)pent-2-enedioate + S-adenosyl-L-homocysteine. Its function is as follows. Catalyzes the S-adenosylmethionine monomethyl esterification of trans-aconitate. This Rhodopseudomonas palustris (strain HaA2) protein is Trans-aconitate 2-methyltransferase.